Here is a 318-residue protein sequence, read N- to C-terminus: Olfactory receptor 2T34 (318 aa).

Over 1 to 30 the chain is Extracellular; that stretch reads MCSGNQTSQNQTASTDFTLTGLFAESKHAA. N5 and N10 each carry an N-linked (GlcNAc...) asparagine glycan. Residues 31–54 form a helical membrane-spanning segment; that stretch reads LLYTVTFLLFLMALTGNALLILLI. The Cytoplasmic portion of the chain corresponds to 55 to 62; sequence HSEPRLHT. A helical transmembrane segment spans residues 63–84; sequence PMYFFISQLALMDLMYLCVTVP. The Extracellular portion of the chain corresponds to 85-105; the sequence is KMLVGQVTGDDTISPSGCGIQ. Cysteines 102 and 194 form a disulfide. A helical transmembrane segment spans residues 106–125; sequence MFFHLTLAGAEVFLLAAMAY. Topologically, residues 126–144 are cytoplasmic; that stretch reads DRYAAVCRPLHYPLLMNQR. The chain crosses the membrane as a helical span at residues 145–163; sequence VCQLLVSACWVLGMVDGLL. The Extracellular portion of the chain corresponds to 164–200; the sequence is LTPITMSFPFCQSRKILSFFCETPALLKLSCSDVSLY. The helical transmembrane segment at 201-224 threads the bilayer; sequence KMLTYLCCILMLLTPIMVISSSYT. The Cytoplasmic segment spans residues 225-241; sequence LILHLIHRMNSAAGRRK. Residues 242–264 traverse the membrane as a helical segment; it reads ALATCSSHMIIVLLLFGASFYTY. Topologically, residues 265-277 are extracellular; that stretch reads MLRSSYHTAEQDM. The chain crosses the membrane as a helical span at residues 278–297; the sequence is MVSAFYTIFTPVLNPLIYSL. Residues 298–318 are Cytoplasmic-facing; it reads RNKDVTRALRSMMQSRMNQEK.

Belongs to the G-protein coupled receptor 1 family.

It localises to the cell membrane. Its function is as follows. Odorant receptor. This is Olfactory receptor 2T34 (OR2T34) from Homo sapiens (Human).